Reading from the N-terminus, the 89-residue chain is Small ribosomal subunit protein uS14A (89 aa).

This sequence belongs to the universal ribosomal protein uS14 family. Part of the 30S ribosomal subunit. Contacts proteins S3 and S10.

In terms of biological role, binds 16S rRNA, required for the assembly of 30S particles and may also be responsible for determining the conformation of the 16S rRNA at the A site. The protein is Small ribosomal subunit protein uS14A of Limosilactobacillus reuteri (strain DSM 20016) (Lactobacillus reuteri).